The following is a 340-amino-acid chain: MELGSLIRATNLWGYTDLMRELGADPLPFLRRFDIPPGIEHQEDAFMSLAGFVRMLEASAAELDCPDFGLRLARWQGLGILGPVAVIARNAATLFGGLEAIGRYLYVHSPALTLTVSSTTARSNVRFGYEVTEPGIPYPLQGYELSMANAARMIRLLGGPQARARVFSFRHAQLGTDAAYREALGCTVRFGRTWCGFEVDHRLAGRPIDHADPETKRIATKYLESQYLPSDATLSERVVGLARRLLPTGQCSAEAIADQLDMHPRTLQRRLAAEGLRCHDLIERERRAQAARYLAQPGLYLSQIAVLLGYSEQSALNRSCRRWFGMTPRQYRAYGGVSGR.

Residues 236–334 (ERVVGLARRL…GMTPRQYRAY (99 aa)) form the HTH araC/xylS-type domain. 2 DNA-binding regions (H-T-H motif) span residues 254 to 275 (EAIA…AAEG) and 301 to 324 (LSQI…RRWF).

Post-translationally, phosphorylated by PknK. Phosphorylation increases affinity for the mymA promoter.

Regulates the expression of the mymA operon. The sequence is that of HTH-type transcriptional regulator VirS (virS) from Mycobacterium tuberculosis (strain CDC 1551 / Oshkosh).